We begin with the raw amino-acid sequence, 197 residues long: dITP/XTP pyrophosphatase (197 aa).

Position 10–15 (10–15) interacts with substrate; it reads SHNGGK. Mg(2+) contacts are provided by Glu41 and Asp70. Asp70 acts as the Proton acceptor in catalysis. Substrate-binding positions include Ser71, 154-157, Lys177, and 182-183; these read FGYD and HR.

It belongs to the HAM1 NTPase family. As to quaternary structure, homodimer. The cofactor is Mg(2+).

It carries out the reaction XTP + H2O = XMP + diphosphate + H(+). The enzyme catalyses dITP + H2O = dIMP + diphosphate + H(+). The catalysed reaction is ITP + H2O = IMP + diphosphate + H(+). Pyrophosphatase that catalyzes the hydrolysis of nucleoside triphosphates to their monophosphate derivatives, with a high preference for the non-canonical purine nucleotides XTP (xanthosine triphosphate), dITP (deoxyinosine triphosphate) and ITP. Seems to function as a house-cleaning enzyme that removes non-canonical purine nucleotides from the nucleotide pool, thus preventing their incorporation into DNA/RNA and avoiding chromosomal lesions. The polypeptide is dITP/XTP pyrophosphatase (Pseudomonas syringae pv. tomato (strain ATCC BAA-871 / DC3000)).